We begin with the raw amino-acid sequence, 605 residues long: DNA primase (605 aa).

The CHC2-type zinc finger occupies 38-62 (CPFHDEKTPSFTVSEDKQICHCFGC). The Toprim domain occupies 260–341 (DEIVLLEGFM…NVFVIQLPSG (82 aa)). Mg(2+)-binding residues include glutamate 266, aspartate 310, and aspartate 312.

This sequence belongs to the DnaG primase family. As to quaternary structure, monomer. Interacts with DnaB. Requires Zn(2+) as cofactor. Mg(2+) is required as a cofactor.

It catalyses the reaction ssDNA + n NTP = ssDNA/pppN(pN)n-1 hybrid + (n-1) diphosphate.. Its function is as follows. RNA polymerase that catalyzes the synthesis of short RNA molecules used as primers for DNA polymerase during DNA replication. The polypeptide is DNA primase (Staphylococcus aureus (strain MSSA476)).